A 435-amino-acid chain; its full sequence is Serine--tRNA ligase (435 aa).

242–244 (TAE) provides a ligand contact to L-serine. Residue 273–275 (RSE) participates in ATP binding. Glutamate 296 provides a ligand contact to L-serine. Residue 360 to 363 (EISS) participates in ATP binding. Serine 396 serves as a coordination point for L-serine.

This sequence belongs to the class-II aminoacyl-tRNA synthetase family. Type-1 seryl-tRNA synthetase subfamily. Homodimer. The tRNA molecule binds across the dimer.

Its subcellular location is the cytoplasm. The catalysed reaction is tRNA(Ser) + L-serine + ATP = L-seryl-tRNA(Ser) + AMP + diphosphate + H(+). It carries out the reaction tRNA(Sec) + L-serine + ATP = L-seryl-tRNA(Sec) + AMP + diphosphate + H(+). The protein operates within aminoacyl-tRNA biosynthesis; selenocysteinyl-tRNA(Sec) biosynthesis; L-seryl-tRNA(Sec) from L-serine and tRNA(Sec): step 1/1. Catalyzes the attachment of serine to tRNA(Ser). Is also able to aminoacylate tRNA(Sec) with serine, to form the misacylated tRNA L-seryl-tRNA(Sec), which will be further converted into selenocysteinyl-tRNA(Sec). The protein is Serine--tRNA ligase of Vibrio atlanticus (strain LGP32) (Vibrio splendidus (strain Mel32)).